We begin with the raw amino-acid sequence, 299 residues long: Nicotinate-nucleotide pyrophosphorylase [carboxylating] (299 aa).

Residues 8–12 (LLLPP) are important for hexamer formation. Quinolinate-binding positions include Arg-102, 138–139 (RK), 160–161 (HR), Lys-171, Glu-201, Asp-222, 248–250 (SGG), and Gly-270.

It belongs to the NadC/ModD family. Hexamer formed by 3 homodimers.

The enzyme catalyses nicotinate beta-D-ribonucleotide + CO2 + diphosphate = quinolinate + 5-phospho-alpha-D-ribose 1-diphosphate + 2 H(+). The protein operates within cofactor biosynthesis; NAD(+) biosynthesis; nicotinate D-ribonucleotide from quinolinate: step 1/1. Functionally, involved in the catabolism of quinolinic acid (QA). In Sus scrofa (Pig), this protein is Nicotinate-nucleotide pyrophosphorylase [carboxylating].